We begin with the raw amino-acid sequence, 1131 residues long: Replication factor C subunit 1 (1131 aa).

Disordered stretches follow at residues 14-87, 92-111, 120-201, and 225-378; these read KKPV…KSEK, YKPG…ETDE, AASK…NDEA, and ARTL…NYQA. A compositionally biased stretch (basic and acidic residues) spans 38-54; that stretch reads GVKEAKVNNSGKEDASK. A Glycyl lysine isopeptide (Lys-Gly) (interchain with G-Cter in SUMO2) cross-link involves residue Lys-49. Tyr-66 is modified (phosphotyrosine). A phosphoserine mark is found at Ser-68, Ser-70, Ser-72, and Ser-107. Thr-109 is modified (phosphothreonine). Positions 127-138 are enriched in polar residues; the sequence is NGVSTNSYLGTS. Phosphoserine is present on Ser-155. 2 positions are modified to phosphothreonine: Thr-160 and Thr-162. 8 positions are modified to phosphoserine: Ser-163, Ser-172, Ser-189, Ser-244, Ser-250, Ser-253, Ser-281, and Ser-309. Residues 184–201 are compositionally biased toward basic and acidic residues; the sequence is KRKESSQNTEDSRLNDEA. A compositionally biased stretch (low complexity) spans 308 to 319; that stretch reads SSPKASAKLALM. 2 stretches are compositionally biased toward basic and acidic residues: residues 334–350 and 359–373; these read AARR…EKTT and TKRE…EKKR. An interferon-stimulated-response-element binding region region spans residues 354–528; sequence TKVSPTKRES…KKESESKKCK (175 aa). A Phosphoserine modification is found at Ser-365. A BRCT domain is found at 399-489; the sequence is GAENCLEGLT…PGKRSKYEMA (91 aa). The tract at residues 491 to 525 is disordered; it reads EAEMKKEKSKLERTPQKNDQGKRKISPAKKESESK. Ser-535 carries the post-translational modification Phosphoserine. Residue 635-642 coordinates ATP; sequence GPPGVGKT. Positions 1073–1131 are disordered; the sequence is PALDSEYSEEFQEDDTQSEKEQDAVETDAMIKKKTRSSKPSKSEREKESKKGKGKNWKK. Residues 1078–1088 show a composition bias toward acidic residues; that stretch reads EYSEEFQEDDT. Phosphoserine is present on Ser-1090. Positions 1104-1108 match the Nuclear localization signal motif; it reads KKKTR. Residues 1113 to 1123 are compositionally biased toward basic and acidic residues; that stretch reads SKSEREKESKK.

This sequence belongs to the activator 1 large subunit family. Large subunit of the RFC complex, an heteropentameric complex consisting of RFC1 and four small subunits RFC2, RFC3, RFC4 and RFC5; the RFC complex interacts with PCNA and the interaction involves RFC1.

It localises to the nucleus. In terms of biological role, subunit of the replication factor C (RFC) complex which acts during elongation of primed DNA templates by DNA polymerases delta and epsilon, and is necessary for ATP-dependent loading of proliferating cell nuclear antigen (PCNA) onto primed DNA. This subunit binds to the primer-template junction. Binds the PO-B transcription element as well as other GA rich DNA sequences. Can bind single- or double-stranded DNA. The polypeptide is Replication factor C subunit 1 (Rfc1) (Mus musculus (Mouse)).